The primary structure comprises 447 residues: Acyl-CoA (8-3)-desaturase (447 aa).

M1 is modified (N-acetylmethionine). Residues 1 to 124 lie on the Cytoplasmic side of the membrane; the sequence is MAPDPVPTPG…FRELRATVER (124 aa). The Cytochrome b5 heme-binding domain maps to 19 to 97; the sequence is TRYFTWEEVA…MNSLLIGELA (79 aa). A helical membrane pass occupies residues 125 to 145; that stretch reads MGLMKANHLFFLVYLLHILLL. At 146 to 160 the chain is on the lumenal side; it reads DVAAWLTLWIFGTSL. The helical transmembrane segment at 161–180 threads the bilayer; that stretch reads VPFILCAVLLSTVQAQAGWL. Residues 181 to 268 are Cytoplasmic-facing; it reads QHDFGHLSVF…HMPYNHQHKY (88 aa). The short motif at 182–186 is the Histidine box-1 element; that stretch reads HDFGH. A Histidine box-2 motif is present at residues 219-223; it reads HFQHH. The chain crosses the membrane as a helical span at residues 269–289; it reads FFLIGPPALLPLYFQWYIFYF. At 290-308 the chain is on the lumenal side; that stretch reads VVQRKKWVDLAWMLSFYAR. Residues 309–329 traverse the membrane as a helical segment; it reads IFFTYMPLLGLKGFLGLFFIV. The Cytoplasmic portion of the chain corresponds to 330–447; that stretch reads RFLESNWFVW…QLWLDAYLHQ (118 aa). The Histidine box-3 motif lies at 385-389; sequence QIEHH.

The protein belongs to the fatty acid desaturase type 1 family. Highly expressed in the adrenal gland, liver, brain, and testis, tissues where lipogenesis and steroidogenesis are active. Expressed in colonic mucosa.

It is found in the endoplasmic reticulum membrane. The protein localises to the mitochondrion. The catalysed reaction is (8Z,11Z,14Z)-eicosatrienoyl-CoA + 2 Fe(II)-[cytochrome b5] + O2 + 2 H(+) = (5Z,8Z,11Z,14Z)-eicosatetraenoyl-CoA + 2 Fe(III)-[cytochrome b5] + 2 H2O. It carries out the reaction (8Z,11Z,14Z,17Z)-eicosatetraenoyl-CoA + 2 Fe(II)-[cytochrome b5] + O2 + 2 H(+) = (5Z,8Z,11Z,14Z,17Z)-eicosapentaenoyl-CoA + 2 Fe(III)-[cytochrome b5] + 2 H2O. It catalyses the reaction (11E)-octadecenoyl-CoA + 2 Fe(II)-[cytochrome b5] + O2 + 2 H(+) = (5Z,11E)-octadecadienoyl-CoA + 2 Fe(III)-[cytochrome b5] + 2 H2O. It participates in lipid metabolism; polyunsaturated fatty acid biosynthesis. Its function is as follows. Acts as a front-end fatty acyl-coenzyme A (CoA) desaturase that introduces a cis double bond at carbon 5 located between a preexisting double bond and the carboxyl end of the fatty acyl chain. Involved in biosynthesis of highly unsaturated fatty acids (HUFA) from the essential polyunsaturated fatty acids (PUFA) linoleic acid (LA) (18:2n-6) and alpha-linolenic acid (ALA) (18:3n-3) precursors. Specifically, desaturates dihomo-gamma-linoleoate (DGLA) (20:3n-6) and eicosatetraenoate (ETA) (20:4n-3) to generate arachidonate (AA) (20:4n-6) and eicosapentaenoate (EPA) (20:5n-3), respectively. As a rate limiting enzyme for DGLA (20:3n-6) and AA (20:4n-6)-derived eicosanoid biosynthesis, controls the metabolism of inflammatory lipids like prostaglandin E2, critical for efficient acute inflammatory response and maintenance of epithelium homeostasis. Contributes to membrane phospholipid biosynthesis by providing AA (20:4n-6) as a major acyl chain esterified into phospholipids. In particular, regulates phosphatidylinositol-4,5-bisphosphate levels, modulating inflammatory cytokine production in T-cells. Also desaturates (11E)-octadecenoate (trans-vaccenoate)(18:1n-9), a metabolite in the biohydrogenation pathway of LA (18:2n-6). In Mus musculus (Mouse), this protein is Acyl-CoA (8-3)-desaturase.